Consider the following 216-residue polypeptide: Uracil-DNA glycosylase (216 aa).

Asp-59 acts as the Proton acceptor in catalysis.

The protein belongs to the uracil-DNA glycosylase (UDG) superfamily. UNG family.

The protein localises to the cytoplasm. The catalysed reaction is Hydrolyzes single-stranded DNA or mismatched double-stranded DNA and polynucleotides, releasing free uracil.. Functionally, excises uracil residues from the DNA which can arise as a result of misincorporation of dUMP residues by DNA polymerase or due to deamination of cytosine. In Staphylococcus epidermidis (strain ATCC 12228 / FDA PCI 1200), this protein is Uracil-DNA glycosylase.